The chain runs to 339 residues: Methylglutaconyl-CoA hydratase, mitochondrial (339 aa).

A mitochondrion-targeting transit peptide spans 1–67 (MAAAVAAAPG…AGGPAPKRGY (67 aa)). N6-acetyllysine; alternate is present on lysine 100. Lysine 100 carries the N6-succinyllysine; alternate modification. The RNA-binding stretch occupies residues 105–119 (KNLIKMLSKAVDALK). Residue lysine 109 is modified to N6-succinyllysine. N6-acetyllysine; alternate occurs at positions 113 and 144. Residues lysine 113 and lysine 144 each carry the N6-succinyllysine; alternate modification. 2 positions are modified to N6-succinyllysine: lysine 148 and lysine 160. Lysine 204 and lysine 211 each carry N6-acetyllysine; alternate. N6-succinyllysine; alternate occurs at positions 204 and 211. An N6-succinyllysine modification is found at lysine 329.

Belongs to the enoyl-CoA hydratase/isomerase family. Homohexamer.

Its subcellular location is the mitochondrion. It catalyses the reaction (3S)-3-hydroxy-3-methylglutaryl-CoA = 3-methyl-(2E)-glutaconyl-CoA + H2O. It carries out the reaction (3S)-citramalyl-CoA = itaconyl-CoA + H2O. The enzyme catalyses 3-hydroxyisovaleryl-CoA = 3-methylbut-2-enoyl-CoA + H2O. The catalysed reaction is (S)-3-hydroxyglutaryl-CoA = (2E)-glutaconyl-CoA + H2O. The protein operates within amino-acid degradation; L-leucine degradation; (S)-3-hydroxy-3-methylglutaryl-CoA from 3-isovaleryl-CoA: step 3/3. Its function is as follows. Catalyzes the fifth step in the leucine degradation pathway, the reversible hydration of 3-methylglutaconyl-CoA (3-MG-CoA) to 3-hydroxy-3-methylglutaryl-CoA (HMG-CoA). Can catalyze the reverse reaction but at a much lower rate in vitro. HMG-CoA is then quickly degraded by another enzyme (such as HMG-CoA lyase) to give acetyl-CoA and acetoacetate. Uses other substrates such as (2E)-glutaconyl-CoA efficiently in vitro, and to a lesser extent 3-methylcrotonyl-CoA (3-methyl-(2E)-butenoyl-CoA), crotonyl-CoA ((2E)-butenoyl-CoA) and 3-hydroxybutanoyl-CoA (the missing carboxylate reduces affinity to the active site). Originally it was identified as an RNA-binding protein as it binds to AU-rich elements (AREs) in vitro. AREs direct rapid RNA degradation and mRNA deadenylation. Might have itaconyl-CoA hydratase activity, converting itaconyl-CoA into citramalyl-CoA in the C5-dicarboxylate catabolism pathway. The C5-dicarboxylate catabolism pathway is required to detoxify itaconate, an antimicrobial metabolite and immunomodulator produced by macrophages during certain infections, that can act as a vitamin B12-poisoning metabolite. The chain is Methylglutaconyl-CoA hydratase, mitochondrial (AUH) from Homo sapiens (Human).